Consider the following 441-residue polypeptide: Glutamyl-tRNA reductase (441 aa).

Residues 49-52, S109, 114-116, and Q120 each bind substrate; these read TCNR and EGQ. C50 (nucleophile) is an active-site residue. 198-203 lines the NADP(+) pocket; sequence GAGRMS.

It belongs to the glutamyl-tRNA reductase family. Homodimer.

The catalysed reaction is (S)-4-amino-5-oxopentanoate + tRNA(Glu) + NADP(+) = L-glutamyl-tRNA(Glu) + NADPH + H(+). The protein operates within porphyrin-containing compound metabolism; protoporphyrin-IX biosynthesis; 5-aminolevulinate from L-glutamyl-tRNA(Glu): step 1/2. It participates in porphyrin-containing compound metabolism; chlorophyll biosynthesis. Its function is as follows. Catalyzes the NADPH-dependent reduction of glutamyl-tRNA(Glu) to glutamate 1-semialdehyde (GSA). This Prochlorococcus marinus (strain NATL2A) protein is Glutamyl-tRNA reductase.